The sequence spans 326 residues: Small ribosomal subunit protein RACK1x (326 aa).

WD repeat units lie at residues 13–53 (AHTD…KSYG), 61–100 (GHSH…TTRR), 103–142 (GHTK…KYTI), 147–188 (GHKE…LRNS), 191–230 (GHSG…KLYS), 232–270 (EAGS…VVED), and 290–326 (NQKK…IGRY).

This sequence belongs to the WD repeat G protein beta family. Ribosomal protein RACK1 subfamily. As to quaternary structure, homodimer and heterodimer with RACK1A or RACK1B. Interacts with GB1, MEKK1, MKK4, MKK5, MPK3 and MPK6, but not with GPA1 or MPK4. Widely expressed.

Functionally, minor component of the RACK1 regulatory proteins that play a role in multiple signal transduction pathways. Involved in multiple hormone responses and developmental processes. MAPK cascade scaffolding protein involved in the protease IV and ArgC signaling pathway but not the flg22 pathway. The protein is Small ribosomal subunit protein RACK1x of Arabidopsis thaliana (Mouse-ear cress).